Here is a 157-residue protein sequence, read N- to C-terminus: Increased recombination centers protein 23 (157 aa).

The Cytoplasmic portion of the chain corresponds to 1–6 (MIEALE). A helical transmembrane segment spans residues 7-29 (IVLLLVIQSLQYICRTCIAFLLI). Residues 30–33 (PFLG) lie on the Lumenal side of the membrane. The helical transmembrane segment at 34-56 (LYAFDLFLYVYRMILYLSQMFNY) threads the bilayer. Over 57-157 (KRKLGRSKTN…EEGYYIAGSI (101 aa)) the chain is Cytoplasmic.

The protein resides in the endoplasmic reticulum membrane. Its function is as follows. Is probably involved in a pathway contributing to genomic integrity. This Saccharomyces cerevisiae (strain ATCC 204508 / S288c) (Baker's yeast) protein is Increased recombination centers protein 23 (IRC23).